We begin with the raw amino-acid sequence, 355 residues long: F-box protein At1g31080 (355 aa).

An F-box domain is found at 4-49 (GANSASIPNDLILEILSRLPAKSTGRFRCVSKLWGSMLCHSYFTEL). Residues 306-320 (AGTSRSPPKQSTSTS) are compositionally biased toward polar residues. Positions 306–333 (AGTSRSPPKQSTSTSSREDHEVRTLAHQ) are disordered. Residues 321–333 (SREDHEVRTLAHQ) are compositionally biased toward basic and acidic residues.

The polypeptide is F-box protein At1g31080 (Arabidopsis thaliana (Mouse-ear cress)).